The following is a 300-amino-acid chain: MSIKSGFVALAGKPNVGKSTFINVVMGRKVVIVSDKPQTTRNRINCIYTDRDSQIIFVDTPGIHKPLHRLGEYMVKAAVQALKGVDLILFMLDAADGFTKTDEHVAKIVSESGTKTIIAVNKIDVAGEEKAKAVGQLAKSMVENVVSVHYISALKGEGVFEVLEKIKEELPEGPQYYPEDMVTDRPLSFMAAEIIREKIFHLTRQEVPHSTAVVIEEIKDRPNGVLYIRANIYVERDSQKGILIGKNGSMIKKIGTLAREELEFLVGRKVYLDLNVKVKENWREKDFIILQEIGLKDDIK.

The 169-residue stretch at 4–172 (KSGFVALAGK…LEKIKEELPE (169 aa)) folds into the Era-type G domain. The tract at residues 12–19 (GKPNVGKS) is G1. 12-19 (GKPNVGKS) provides a ligand contact to GTP. Residues 38 to 42 (QTTRN) are G2. Residues 59–62 (DTPG) form a G3 region. GTP-binding positions include 59-63 (DTPGI) and 121-124 (NKID). The tract at residues 121-124 (NKID) is G4. Residues 151–153 (ISA) form a G5 region. The KH type-2 domain maps to 195–280 (IREKIFHLTR…YLDLNVKVKE (86 aa)).

This sequence belongs to the TRAFAC class TrmE-Era-EngA-EngB-Septin-like GTPase superfamily. Era GTPase family. In terms of assembly, monomer.

It localises to the cytoplasm. It is found in the cell inner membrane. Functionally, an essential GTPase that binds both GDP and GTP, with rapid nucleotide exchange. Plays a role in 16S rRNA processing and 30S ribosomal subunit biogenesis and possibly also in cell cycle regulation and energy metabolism. This chain is GTPase Era, found in Thermotoga petrophila (strain ATCC BAA-488 / DSM 13995 / JCM 10881 / RKU-1).